Reading from the N-terminus, the 432-residue chain is Serine hydroxymethyltransferase (432 aa).

Residues Leu-131 and 135 to 137 contribute to the (6S)-5,6,7,8-tetrahydrofolate site; that span reads GHL. Lys-240 is modified (N6-(pyridoxal phosphate)lysine).

It belongs to the SHMT family. Homodimer. It depends on pyridoxal 5'-phosphate as a cofactor.

It is found in the cytoplasm. It catalyses the reaction (6R)-5,10-methylene-5,6,7,8-tetrahydrofolate + glycine + H2O = (6S)-5,6,7,8-tetrahydrofolate + L-serine. Its pathway is one-carbon metabolism; tetrahydrofolate interconversion. The protein operates within amino-acid biosynthesis; glycine biosynthesis; glycine from L-serine: step 1/1. Functionally, catalyzes the reversible interconversion of serine and glycine with tetrahydrofolate (THF) serving as the one-carbon carrier. This reaction serves as the major source of one-carbon groups required for the biosynthesis of purines, thymidylate, methionine, and other important biomolecules. Also exhibits THF-independent aldolase activity toward beta-hydroxyamino acids, producing glycine and aldehydes, via a retro-aldol mechanism. This is Serine hydroxymethyltransferase from Bradyrhizobium diazoefficiens (strain JCM 10833 / BCRC 13528 / IAM 13628 / NBRC 14792 / USDA 110).